Reading from the N-terminus, the 370-residue chain is 1-propanol dehydrogenase PduQ (370 aa).

This sequence belongs to the iron-containing alcohol dehydrogenase family. As to quaternary structure, interacts with PduP, probably via the N-terminus of PduQ. Fe cation serves as cofactor.

The protein localises to the bacterial microcompartment. It catalyses the reaction 1-propanol + NAD(+) = propanal + NADH + H(+). It functions in the pathway polyol metabolism; 1,2-propanediol degradation. In terms of biological role, an iron-dependent alcohol dehydrogenase required for optimal 1,2-propanediol (1,2-PD) degradation. NAD(+) and NADH are regenerated internally within the bacterial microcompartment (BMC) dedicated to 1,2-PD degradation by the PduP and PduQ enzymes, which reduce NAD(+) and oxidize NADH respectively, although there must also be cofactor transport across the BMC. Functionally, expression of a cosmid containing the full 21-gene pdu operon in E.coli allows E.coli to grow on 1,2-propanediol (1,2-PD) with the appearance of bacterial microcompartments (BMC) in its cytoplasm. The 1,2-PD-specific bacterial microcompartment (BMC) concentrates low levels of 1,2-PD catabolic enzymes, concentrates volatile reaction intermediates thus enhancing pathway flux and keeps the level of toxic, mutagenic propionaldehyde low. This Citrobacter freundii protein is 1-propanol dehydrogenase PduQ.